Here is a 61-residue protein sequence, read N- to C-terminus: MDPNCSCAAGGSCTCAGSCKCKECKCTSCKKSCCSCCPPGCTKCAQGCVCKGASDKCNCCA.

N-acetylmethionine is present on methionine 1. A beta region spans residues 1–29; the sequence is MDPNCSCAAGGSCTCAGSCKCKECKCTSC. A divalent metal cation is bound by residues cysteine 5, cysteine 7, cysteine 13, cysteine 15, cysteine 19, cysteine 21, cysteine 24, cysteine 26, cysteine 29, cysteine 33, cysteine 34, cysteine 36, cysteine 37, cysteine 41, cysteine 44, cysteine 48, cysteine 50, cysteine 57, cysteine 59, and cysteine 60. Residues 30-61 form an alpha region; that stretch reads KKSCCSCCPPGCTKCAQGCVCKGASDKCNCCA.

Belongs to the metallothionein superfamily. Type 1 family. As to quaternary structure, monomer.

Its function is as follows. Metallothioneins have a high content of cysteine residues that bind various heavy metals. The chain is Metallothionein from Balaena mysticetus (Bowhead whale).